Consider the following 116-residue polypeptide: Mercuric transport protein MerT (116 aa).

The next 2 membrane-spanning stretches (helical) occupy residues 16–36 (LAAILASACCLGPLVLIALGF) and 46–66 (VLEPYRPIFIGVALVALFFAW). Residues C24 and C25 each contribute to the Hg(2+) site. 2 residues coordinate Hg(2+): C76 and C82. A helical membrane pass occupies residues 94-114 (IFWGVAVLVLVALGFPYVVPF).

It belongs to the MerT family.

Its subcellular location is the cell inner membrane. Involved in mercury resistance. Probably transfers a mercuric ion from the periplasmic Hg(2+)-binding protein MerP to the cytoplasmic mercuric reductase MerA. This Pseudomonas fluorescens protein is Mercuric transport protein MerT.